A 589-amino-acid polypeptide reads, in one-letter code: F-box only protein 24 (589 aa).

Positions 23–69 (PISVQLFPPELVEHIVSFLPVKDLVALGQTCHYFHEVCDAEGVWRRI) constitute an F-box domain. The RCC1 repeat unit spans residues 386–435 (GRIFMQGNNRYGQLGTGDKMDRGEPTQVHYLQRPIALWCGLNHSLVLSQT). A disordered region spans residues 506-526 (VGGSPEPSQGAGAPQDPGGTA).

Directly interacts with SKP1 and CUL1.

Its function is as follows. Substrate-recognition component of the SCF (SKP1-CUL1-F-box protein)-type E3 ubiquitin ligase complex. This chain is F-box only protein 24 (Fbxo24), found in Mus musculus (Mouse).